Reading from the N-terminus, the 173-residue chain is uncharacterized protein (173 aa).

An N-terminal signal peptide occupies residues methionine 1–alanine 25.

This is an uncharacterized protein from Mycobacterium bovis (strain ATCC BAA-935 / AF2122/97).